The chain runs to 1481 residues: Cystic fibrosis transmembrane conductance regulator (1481 aa).

Topologically, residues 1-77 (MQKSPLEKAG…KLINALRRCF (77 aa)) are cytoplasmic. Residues 78-98 (FWRFMFYGILLYLGEVTKAVQ) traverse the membrane as a helical segment. The 285-residue stretch at 81–365 (FMFYGILLYL…WAVQTWYDSL (285 aa)) folds into the ABC transmembrane type-1 1 domain. The Extracellular segment spans residues 99-122 (PLLLGRIIASYDPDNKVERSIAIY). A helical transmembrane segment spans residues 123–146 (LGIGLCLLFVVRTLLLHPAIFGLH). The Cytoplasmic portion of the chain corresponds to 147-195 (HIGMQMRIAMFSLIYKKTLKLSSRVLDKISIGQLISLLSNNLNKFDEGL). Residues 196 to 216 (ALAHFVWISPLQVTLLMGLLW) traverse the membrane as a helical segment. The Extracellular segment spans residues 217–222 (ELLQAS). The helical transmembrane segment at 223–243 (AFCGLAFLIVLALVQAGLGRM) threads the bilayer. Residues 244–298 (MMKYRDQRAGKINERLVITSEMIENIQSVKAYCWEEAMEKMIENLRQTELKLTRK) lie on the Cytoplasmic side of the membrane. Residues 299–319 (AAYVRYFNSSAFFFSGFFVVF) traverse the membrane as a helical segment. Over 320-339 (LSVLPYALTKGIILRKIFTT) the chain is Extracellular. Residues 340-358 (ISFCIVLRMAVTRQFPWAV) traverse the membrane as a helical segment. Residues 359 to 858 (QTWYDSLGAI…YLRYITVHRS (500 aa)) lie on the Cytoplasmic side of the membrane. ATP-binding positions include Trp401, Ser434, 458 to 465 (GSTGAGKT), and Gln493. In terms of domain architecture, ABC transporter 1 spans 423 to 646 (NGDNNLFFSN…RPDFSSKLMG (224 aa)). Cys524 is lipidated: S-palmitoyl cysteine. Phosphoserine occurs at positions 549 and 660. The disordered R region stretch occupies residues 654-831 (SAERRNSILT…EEINEEDLKE (178 aa)). At Ser670 the chain carries Phosphoserine; by PKA. Phosphoserine is present on Ser686. Lys688 is covalently cross-linked (Glycyl lysine isopeptide (Lys-Gly) (interchain with G-Cter in ubiquitin)). Ser700 and Ser712 each carry phosphoserine. Thr717 is modified (phosphothreonine). Residues Ser737, Ser768, Ser790, Ser795, and Ser813 each carry the phosphoserine modification. A helical transmembrane segment spans residues 859–879 (LIFVLIWCIVIFLAEVAASLV). In terms of domain architecture, ABC transmembrane type-1 2 spans 859 to 1155 (LIFVLIWCIV…AVNSSIDVDS (297 aa)). Over 880–918 (VLWLFGNTAPQDKENSTKSGNSSYAVIITNTSSYYFFYI) the chain is Extracellular. Residues Asn894, Asn900, and Asn909 are each glycosylated (N-linked (GlcNAc...) asparagine). A discontinuously helical membrane pass occupies residues 919-939 (YVGVADTLLALGLFRGLPLVH). Topologically, residues 940–990 (TLITVSKILHHKMLHSVLQAPMSTLNTLKAGGILNRFSKDIAILDDLLPLT) are cytoplasmic. The helical transmembrane segment at 991–1011 (IFDFIQLLLIVVGAIAVVSVL) threads the bilayer. The Extracellular portion of the chain corresponds to 1012-1013 (QP). The chain crosses the membrane as a helical span at residues 1014–1034 (YIFLATVPVIAAFILLRAYFL). The Cytoplasmic portion of the chain corresponds to 1035 to 1095 (HTSQQLKQLE…TANWFLYLST (61 aa)). Residues 1096-1116 (LRWFQMRIEMIFVLFFIAVAF) form a helical membrane-spanning segment. At 1117–1130 (ISILTTGEGEGRVG) the chain is on the extracellular side. The helical transmembrane segment at 1131–1151 (IILTLAMNIMSTLQWAVNSSI) threads the bilayer. The Cytoplasmic segment spans residues 1152–1481 (DVDSLMRSVS…AEEEVQGTRL (330 aa)). Positions 1199–1444 (VKKDDVWPSG…KSLFRQAISS (246 aa)) constitute an ABC transporter 2 domain. Residues Tyr1220 and 1245–1252 (GRTGSGKS) contribute to the ATP site. Positions 1387–1481 (RTLKQAFADC…AEEEVQGTRL (95 aa)) are interaction with GORASP2. Cys1396 carries S-palmitoyl cysteine lipidation. Phosphoserine occurs at positions 1445 and 1457. Residues 1449–1481 (KLFPHRNSSKHKSRPQITALKEEAEEEVQGTRL) are disordered. The span at 1450 to 1462 (LFPHRNSSKHKSR) shows a compositional bias: basic residues. Acidic residues predominate over residues 1471 to 1481 (EAEEEVQGTRL). A PDZ-binding motif is present at residues 1479 to 1481 (TRL).

It belongs to the ABC transporter superfamily. ABCC family. CFTR transporter (TC 3.A.1.202) subfamily. Monomer; does not require oligomerization for channel activity. May form oligomers in the membrane. Interacts with SLC26A3, SLC26A6 and NHERF1. Interacts with SHANK2. Interacts with MYO6. Interacts (via C-terminus) with GOPC (via PDZ domain); this promotes CFTR internalization and thereby decreases channel activity. Interacts with SLC4A7 through NHERF1. Found in a complex with MYO5B and RAB11A. Interacts with ANO1. Interacts with SLC26A8. Interacts with AHCYL1; the interaction increases CFTR activity. Interacts with CSE1L. The core-glycosylated form interacts with GORASP2 (via PDZ GRASP-type 1 domain) in respone to ER stress. Interacts with MARCHF2; the interaction leads to CFTR ubiqtuitination and degradation. Interacts with ADGRG2. N-glycosylated. Post-translationally, phosphorylated; cAMP treatment promotes phosphorylation and activates the channel. Dephosphorylation decreases the ATPase activity (in vitro). Phosphorylation at PKA sites activates the channel. Phosphorylation at PKC sites enhances the response to phosphorylation by PKA. Phosphorylated by AMPK; this inhibits channel activity. In terms of processing, ubiquitinated, leading to its degradation in the lysosome. Deubiquitination by USP10 in early endosomes enhances its endocytic recycling to the cell membrane. Ubiquitinated by RNF185 during ER stress. Ubiquitinated by MARCHF2. In terms of tissue distribution, isoform 1 is expressed in the pancreas. Isoform 2 is specifically expressed in the ventricle.

It is found in the apical cell membrane. It localises to the early endosome membrane. Its subcellular location is the cell membrane. The protein localises to the recycling endosome membrane. The protein resides in the endoplasmic reticulum membrane. It is found in the nucleus. The catalysed reaction is ATP + H2O + closed Cl(-) channel = ADP + phosphate + open Cl(-) channel.. It carries out the reaction chloride(in) = chloride(out). It catalyses the reaction hydrogencarbonate(in) = hydrogencarbonate(out). The enzyme catalyses ATP + H2O = ADP + phosphate + H(+). In terms of biological role, epithelial ion channel that plays an important role in the regulation of epithelial ion and water transport and fluid homeostasis. Mediates the transport of chloride ions across the cell membrane. Possesses an intrinsic ATPase activity and utilizes ATP to gate its channel; the passive flow of anions through the channel is gated by cycles of ATP binding and hydrolysis by the ATP-binding domains. The ion channel is also permeable to HCO(3)(-); selectivity depends on the extracellular chloride concentration. Exerts its function also by modulating the activity of other ion channels and transporters. Contributes to the regulation of the pH and the ion content of the epithelial fluid layer. Modulates the activity of the epithelial sodium channel (ENaC) complex, in part by regulating the cell surface expression of the ENaC complex. May regulate bicarbonate secretion and salvage in epithelial cells by regulating the transporter SLC4A7. Can inhibit the chloride channel activity of ANO1. Plays a role in the chloride and bicarbonate homeostasis during sperm epididymal maturation and capacitation. This Oryctolagus cuniculus (Rabbit) protein is Cystic fibrosis transmembrane conductance regulator.